The primary structure comprises 538 residues: Coiled-coil domain-containing protein 8 (538 aa).

The disordered stretch occupies residues 58-128; sequence IMEKSTPHPP…QGPRRGKKVR (71 aa). A compositionally biased stretch (basic residues) spans 119 to 128; sequence QGPRRGKKVR. Residues S142, S146, and S261 each carry the phosphoserine modification. The segment at 213–473 is disordered; the sequence is WAPRAGPGVG…GTAPGARARK (261 aa). Over residues 301–313 the composition is skewed to basic and acidic residues; that stretch reads DSQREEAIADQRE. The segment covering 321 to 332 has biased composition (low complexity); sequence AGAPADQGAEAA. A coiled-coil region spans residues 349–366; sequence AEEGAEAADNQREEAADN. 3 stretches are compositionally biased toward basic and acidic residues: residues 357-373, 381-392, and 405-419; these read DNQR…EAPA, DNHREEAADNQR, and DNQR…RERA. Low complexity-rich tracts occupy residues 428-438 and 458-469; these read QRAQARAGQRA and AAQGTTGTAPGA. Residues 500–506 carry the PxLPxI/L motif; mediates interaction with ANKRA2 motif; the sequence is PRLPTLP. The stretch at 514-535 forms a coiled coil; that stretch reads EARNLRVLRAEARAEAEQGEQE.

As to quaternary structure, component of the 3M complex, composed of core components CUL7, CCDC8 and OBSL1. Interacts (via PxLPxI/L motif) with ANKRA2 (via ankyrin repeats); may link the 3M complex to histone deacetylases including HDAC4 and HDAC5. As to expression, widely expressed with low levels in spleen, skeletal muscle, small intestine, kidney and liver.

Its subcellular location is the cytoplasm. The protein resides in the cytoskeleton. It localises to the microtubule organizing center. The protein localises to the centrosome. In terms of biological role, core component of the 3M complex, a complex required to regulate microtubule dynamics and genome integrity. It is unclear how the 3M complex regulates microtubules, it could act by controlling the level of a microtubule stabilizer. Required for localization of CUL7 to the centrosome. The protein is Coiled-coil domain-containing protein 8 (CCDC8) of Homo sapiens (Human).